A 248-amino-acid polypeptide reads, in one-letter code: Sugar fermentation stimulation protein homolog (248 aa).

It belongs to the SfsA family.

In Methylorubrum extorquens (strain CM4 / NCIMB 13688) (Methylobacterium extorquens), this protein is Sugar fermentation stimulation protein homolog.